The sequence spans 393 residues: NAD(P)H-quinone oxidoreductase subunit H, chloroplastic (393 aa).

This sequence belongs to the complex I 49 kDa subunit family. NDH is composed of at least 16 different subunits, 5 of which are encoded in the nucleus.

The protein resides in the plastid. It localises to the chloroplast thylakoid membrane. It catalyses the reaction a plastoquinone + NADH + (n+1) H(+)(in) = a plastoquinol + NAD(+) + n H(+)(out). The enzyme catalyses a plastoquinone + NADPH + (n+1) H(+)(in) = a plastoquinol + NADP(+) + n H(+)(out). Functionally, NDH shuttles electrons from NAD(P)H:plastoquinone, via FMN and iron-sulfur (Fe-S) centers, to quinones in the photosynthetic chain and possibly in a chloroplast respiratory chain. The immediate electron acceptor for the enzyme in this species is believed to be plastoquinone. Couples the redox reaction to proton translocation, and thus conserves the redox energy in a proton gradient. The sequence is that of NAD(P)H-quinone oxidoreductase subunit H, chloroplastic from Cryptomeria japonica (Japanese cedar).